A 399-amino-acid polypeptide reads, in one-letter code: Odorant receptor 42b (399 aa).

Over 1 to 45 the chain is Cytoplasmic; that stretch reads MVFELIRPAPLTEQKRSRDGCIYLYRAMKFIGWLPPKQGVLRYVY. A helical transmembrane segment spans residues 46–66; sequence LTWTLMTFVWCTTYLPLGFLG. The Extracellular segment spans residues 67–83; sequence SYMTQIKSFSPGEFLTS. The chain crosses the membrane as a helical span at residues 84–104; it reads LQVCINAYGSSVKVAITYSML. Topologically, residues 105–140 are cytoplasmic; sequence WRLIKAKNILDQLDLRCTAMEEREKIHLVVARSNHA. The chain crosses the membrane as a helical span at residues 141–161; the sequence is FLIFTFVYCGYAGSTYLSSVL. At 162–178 the chain is on the extracellular side; the sequence is SGRPPWQLYNPFIDWHD. A helical membrane pass occupies residues 179–199; the sequence is GTLKLWVASTLEYMVMSGAVL. Residues 200–268 lie on the Cytoplasmic side of the membrane; it reads QDQLSDSYPL…AIIKPVIQGT (69 aa). A helical transmembrane segment spans residues 269–289; sequence IFTQFLLIGLVLGFTLINVFF. The Extracellular segment spans residues 290–292; that stretch reads FSD. Residues 293 to 313 form a helical membrane-spanning segment; that stretch reads IWTGIASFMFVITILLQTFPF. Over 314–356 the chain is Cytoplasmic; it reads CYTCNLIMEDCESLTHAIFQSNWVDASRRYKTTLLYFLQNVQQ. A helical membrane pass occupies residues 357 to 377; the sequence is PIVFIAGGIFQISMSSNISVA. At 378-399 the chain is on the extracellular side; sequence KFAFSVITITKQMNIADKFKTD.

Belongs to the insect chemoreceptor superfamily. Heteromeric odorant receptor channel (TC 1.A.69) family. Or2a subfamily. Interacts with Orco. Complexes exist early in the endomembrane system in olfactory sensory neurons (OSNs), coupling these complexes to the conserved ciliary trafficking pathway. Expressed in olfactory sensory neurons in the antenna.

It is found in the cell membrane. In terms of biological role, odorant receptor which mediates acceptance or avoidance behavior, depending on its substrates. The odorant receptor repertoire encodes a large collection of odor stimuli that vary widely in identity, intensity, and duration. May form a complex with Orco to form odorant-sensing units, providing sensitive and prolonged odorant signaling and calcium permeability. Involved in the behavioral responses to ethyl acetate and pentyl acetate. In Drosophila melanogaster (Fruit fly), this protein is Odorant receptor 42b (Or42b).